The primary structure comprises 169 residues: Monothiol glutaredoxin-S15, mitochondrial (169 aa).

The N-terminal 37 residues, 1 to 37 (MAASLSSRLIKGIANLKAVRSSRLTSASVYQNGMMRF), are a transit peptide targeting the mitochondrion. The tract at residues 38–61 (SSTVPSDSDTHDDFKPTQKVPPDS) is disordered. A Glutaredoxin domain is found at 66–168 (KDIVENDVKD…QKLKDVSGNQ (103 aa)). Lys-83 provides a ligand contact to glutathione. Position 91 (Cys-91) interacts with [2Fe-2S] cluster. Residues Lys-120, Phe-132, and 145–146 (SD) contribute to the glutathione site.

The protein belongs to the glutaredoxin family. CGFS subfamily. In terms of assembly, [2Fe-2S]-bridged holo-homodimer. Interacts in vitro with SUFE1, BOLA1, BOLA2 and BOLA4. Interacts in vivo only with BOLA4.

Its subcellular location is the mitochondrion. Functionally, may only reduce GSH-thiol disulfides, but not protein disulfides. Participates probably to the maturation of iron-sulfur proteins and to the regulation of the redox state of the BOLA proteins. The polypeptide is Monothiol glutaredoxin-S15, mitochondrial (Arabidopsis thaliana (Mouse-ear cress)).